We begin with the raw amino-acid sequence, 539 residues long: CTP synthase (539 aa).

The amidoligase domain stretch occupies residues 1–268 (MSFKSIFLTG…SDFLLNKLGF (268 aa)). S14 serves as a coordination point for CTP. S14 is a UTP binding site. 15-20 (SLGKGL) contacts ATP. Residue Y55 coordinates L-glutamine. D72 is an ATP binding site. 2 residues coordinate Mg(2+): D72 and E142. CTP contacts are provided by residues 149–151 (DIE), 188–193 (KTKPTQ), and K224. Residues 188–193 (KTKPTQ) and K224 each bind UTP. The Glutamine amidotransferase type-1 domain occupies 294 to 532 (RIGLVGKYLE…IRAAKAYSLE (239 aa)). Residue G353 participates in L-glutamine binding. C380 serves as the catalytic Nucleophile; for glutamine hydrolysis. L-glutamine contacts are provided by residues 381 to 384 (LGMQ), E404, and R460. Catalysis depends on residues H505 and E507.

It belongs to the CTP synthase family. In terms of assembly, homotetramer.

The enzyme catalyses UTP + L-glutamine + ATP + H2O = CTP + L-glutamate + ADP + phosphate + 2 H(+). It catalyses the reaction L-glutamine + H2O = L-glutamate + NH4(+). It carries out the reaction UTP + NH4(+) + ATP = CTP + ADP + phosphate + 2 H(+). The protein operates within pyrimidine metabolism; CTP biosynthesis via de novo pathway; CTP from UDP: step 2/2. Allosterically activated by GTP, when glutamine is the substrate; GTP has no effect on the reaction when ammonia is the substrate. The allosteric effector GTP functions by stabilizing the protein conformation that binds the tetrahedral intermediate(s) formed during glutamine hydrolysis. Inhibited by the product CTP, via allosteric rather than competitive inhibition. Catalyzes the ATP-dependent amination of UTP to CTP with either L-glutamine or ammonia as the source of nitrogen. Regulates intracellular CTP levels through interactions with the four ribonucleotide triphosphates. The protein is CTP synthase of Chlamydia trachomatis serovar L2 (strain ATCC VR-902B / DSM 19102 / 434/Bu).